A 1235-amino-acid chain; its full sequence is Major DNA-binding protein (1235 aa).

The segment at 536–584 (GGLDGKGDDGVPGGGAGGGGGRDVSGGPSDGLGGGRGGGGGGDSGGMMG) is disordered. A compositionally biased stretch (gly residues) spans 545–584 (GVPGGGAGGGGGRDVSGGPSDGLGGGRGGGGGGDSGGMMG). A Required for filament formation motif is present at residues 846-847 (FW). Over residues 1214 to 1226 (GVGGSSGGGGGSG) the composition is skewed to gly residues. A disordered region spans residues 1214-1235 (GVGGSSGGGGGSGLLPAKRSRL). The segment at 1232 to 1235 (RSRL) is required for nuclear localization.

The protein belongs to the herpesviridae major DNA-binding protein family. As to quaternary structure, homooligomers. Forms double-helical filaments necessary for the formation of replication compartments within the host nucleus. Interacts with the origin-binding protein. Interacts with the helicase primase complex; this interaction stimulates primer synthesis activity of the helicase-primase complex. Interacts with the DNA polymerase. Interacts with the alkaline exonuclease; this interaction increases its nuclease processivity.

The protein resides in the host nucleus. Plays several crucial roles in viral infection. Participates in the opening of the viral DNA origin to initiate replication by interacting with the origin-binding protein. May disrupt loops, hairpins and other secondary structures present on ssDNA to reduce and eliminate pausing of viral DNA polymerase at specific sites during elongation. Promotes viral DNA recombination by performing strand-transfer, characterized by the ability to transfer a DNA strand from a linear duplex to a complementary single-stranded DNA circle. Can also catalyze the renaturation of complementary single strands. Additionally, reorganizes the host cell nucleus, leading to the formation of prereplicative sites and replication compartments. This process is driven by the protein which can form double-helical filaments in the absence of DNA. The sequence is that of Major DNA-binding protein from Homo sapiens (Human).